Consider the following 396-residue polypeptide: Transcription factor E2FC (396 aa).

Polar residues predominate over residues 34–48; that stretch reads PRYSSLTPSSTNRPF. The segment at 34–57 is disordered; it reads PRYSSLTPSSTNRPFSVSQSLPNS. Residues 155–220 mediate DNA binding; it reads RYDSSLGLLT…TTKNHIRWKG (66 aa). A coiled-coil region spans residues 226–268; the sequence is QKDLGDQISRLKSEVESMQSEESRLDDLIRERQEALRSLEEDD. Residues 236 to 264 form a leucine-zipper region; sequence LKSEVESMQSEESRLDDLIRERQEALRSL. Residues 376-391 are retinoblastoma protein binding; the sequence is DYWFESDAEVSLTDLW.

Belongs to the E2F/DP family. In terms of assembly, heterodimer with DP proteins. Interacts preferentially with DPB, but also with DPA. No interaction with DPB when phosphorylated. Interacts with SKP2A, CDKA-1 and maize retinoblastoma-related protein RBR1. Component of a DREAM-like complex which modulates a variety of developmentally regulated genes and of the mitotic genes in proliferating and differentiated cells. Interacts with MYB3R3 at later stages of leaves development. In terms of processing, phosphorylated by cyclin-dependent kinase. Phosphorylation is necessary to target E2FC for proteolysis. Expressed in meristematic areas, vascular tissues, apical part of the roots, cotyledons, upper region of the hypocotyls, trichomes, young flower buds and pollen grains.

The protein localises to the cytoplasm. Functionally, involved in transcriptional repression. May act by repressing E2F-regulated genes in mature differentiated cells, but is not an antagonist of E2FA. Restricts cell division and is involved in the coordination between cell proliferation and endoreduplication during development. May play a role during the transition from skotomorphogenesis to photomorphogenesis. Regulated by phosphorylation-dependent proteolysis via the protein-ubiquitin ligase SCF(SKP2A) complex. This chain is Transcription factor E2FC (E2FC), found in Arabidopsis thaliana (Mouse-ear cress).